Here is a 225-residue protein sequence, read N- to C-terminus: Octanoyltransferase (225 aa).

In terms of domain architecture, BPL/LPL catalytic spans 44–219 (RETPDEIWLL…NFIAQLTHRI (176 aa)). Residues 83–90 (RGGQITYH), 150–152 (SLG), and 163–165 (GIA) each bind substrate. The Acyl-thioester intermediate role is filled by C181.

It belongs to the LipB family.

It is found in the cytoplasm. It catalyses the reaction octanoyl-[ACP] + L-lysyl-[protein] = N(6)-octanoyl-L-lysyl-[protein] + holo-[ACP] + H(+). Its pathway is protein modification; protein lipoylation via endogenous pathway; protein N(6)-(lipoyl)lysine from octanoyl-[acyl-carrier-protein]: step 1/2. In terms of biological role, catalyzes the transfer of endogenously produced octanoic acid from octanoyl-acyl-carrier-protein onto the lipoyl domains of lipoate-dependent enzymes. Lipoyl-ACP can also act as a substrate although octanoyl-ACP is likely to be the physiological substrate. This chain is Octanoyltransferase, found in Nitrosomonas eutropha (strain DSM 101675 / C91 / Nm57).